The primary structure comprises 123 residues: Immunoglobulin heavy variable 4-34 (123 aa).

The first 26 residues, M1–S26, serve as a signal peptide directing secretion. Residues S26–R123 form a v region region. Residues Q27–Y51 are framework-1. The region spanning Q27 to R123 is the Ig-like domain. An intrachain disulfide couples C48 to C121. The complementarity-determining-1 stretch occupies residues G52 to Y59. The tract at residues W60–E76 is framework-2. Positions I77–T83 are complementarity-determining-2. Residue N78 is glycosylated (N-linked (GlcNAc...) asparagine). A framework-3 region spans residues N84–C121. The segment at A122 to R123 is complementarity-determining-3.

In terms of assembly, immunoglobulins are composed of two identical heavy chains and two identical light chains; disulfide-linked.

The protein localises to the secreted. It localises to the cell membrane. Functionally, v region of the variable domain of immunoglobulin heavy chains that participates in the antigen recognition. Immunoglobulins, also known as antibodies, are membrane-bound or secreted glycoproteins produced by B lymphocytes. In the recognition phase of humoral immunity, the membrane-bound immunoglobulins serve as receptors which, upon binding of a specific antigen, trigger the clonal expansion and differentiation of B lymphocytes into immunoglobulins-secreting plasma cells. Secreted immunoglobulins mediate the effector phase of humoral immunity, which results in the elimination of bound antigens. The antigen binding site is formed by the variable domain of one heavy chain, together with that of its associated light chain. Thus, each immunoglobulin has two antigen binding sites with remarkable affinity for a particular antigen. The variable domains are assembled by a process called V-(D)-J rearrangement and can then be subjected to somatic hypermutations which, after exposure to antigen and selection, allow affinity maturation for a particular antigen. In Homo sapiens (Human), this protein is Immunoglobulin heavy variable 4-34.